The sequence spans 515 residues: Galactose/methyl galactoside import ATP-binding protein MglA (515 aa).

ABC transporter domains lie at 8–243 and 254–499; these read LEMR…VGRE and IPKE…AKYL. 40–47 contacts ATP; sequence GENGAGKS.

The protein belongs to the ABC transporter superfamily. Galactose/methyl galactoside importer (TC 3.A.1.2.3) family. The complex is composed of one ATP-binding protein (MglA), two transmembrane proteins (MglC) and a solute-binding protein (MglB).

Its subcellular location is the cell membrane. It catalyses the reaction D-galactose(out) + ATP + H2O = D-galactose(in) + ADP + phosphate + H(+). The catalysed reaction is methyl beta-D-galactoside(out) + ATP + H2O = methyl beta-D-galactoside(in) + ADP + phosphate + H(+). Its function is as follows. Part of the ABC transporter complex MglABC involved in galactose/methyl galactoside import. Responsible for energy coupling to the transport system. The chain is Galactose/methyl galactoside import ATP-binding protein MglA from Clostridium perfringens (strain SM101 / Type A).